A 338-amino-acid chain; its full sequence is CRISPR-associated endonuclease Cas1 (338 aa).

Residues glutamate 155, histidine 220, and glutamate 235 each contribute to the Mn(2+) site.

It belongs to the CRISPR-associated endonuclease Cas1 family. In terms of assembly, homodimer, forms a heterotetramer with a Cas2 homodimer. Requires Mg(2+) as cofactor. The cofactor is Mn(2+).

In terms of biological role, CRISPR (clustered regularly interspaced short palindromic repeat), is an adaptive immune system that provides protection against mobile genetic elements (viruses, transposable elements and conjugative plasmids). CRISPR clusters contain spacers, sequences complementary to antecedent mobile elements, and target invading nucleic acids. CRISPR clusters are transcribed and processed into CRISPR RNA (crRNA). Acts as a dsDNA endonuclease. Involved in the integration of spacer DNA into the CRISPR cassette. The type III-A Csm effector complex binds crRNA and acts as a crRNA-guided RNase, DNase and cyclic oligoadenylate synthase; binding of target RNA cognate to the crRNA is required for all activities. The sequence is that of CRISPR-associated endonuclease Cas1 from Mycobacterium tuberculosis (strain CDC 1551 / Oshkosh).